The chain runs to 440 residues: Xaa-Pro dipeptidase (440 aa).

Residues Asp246, Asp257, His337, Glu382, and Glu421 each contribute to the Mn(2+) site.

It belongs to the peptidase M24B family. Bacterial-type prolidase subfamily. It depends on Mn(2+) as a cofactor.

It catalyses the reaction Xaa-L-Pro dipeptide + H2O = an L-alpha-amino acid + L-proline. Functionally, splits dipeptides with a prolyl residue in the C-terminal position. The chain is Xaa-Pro dipeptidase from Aeromonas hydrophila subsp. hydrophila (strain ATCC 7966 / DSM 30187 / BCRC 13018 / CCUG 14551 / JCM 1027 / KCTC 2358 / NCIMB 9240 / NCTC 8049).